The sequence spans 1312 residues: Retinoblastoma-like protein A (1312 aa).

7 disordered regions span residues 1–67 (MMAH…NNEN), 168–231 (SSSS…KNSS), 336–359 (HNYN…NNNN), 536–611 (NNNN…IYGT), 987–1023 (NNNN…NNNN), 1168–1236 (KKND…NNTE), and 1249–1312 (EESP…RLKS). Residues 10–67 (TNINTKTTAPTTTTTEQQPEQQQQQPEQQQQEKQNNNNNNNNNNNNNNNINNNENNEN) show a composition bias toward low complexity. Positions 36 to 117 (EQQQQEKQNN…TSSALNVDQD (82 aa)) form a coiled coil. Residues 168–179 (SSSSFQPDNNSK) show a composition bias toward polar residues. Over residues 180-189 (IKGRKIRKTN) the composition is skewed to basic residues. Residues 195 to 230 (NNDSNEEEEETTTDTEEEEEEDTLLNENNNSINKNS) are a coiled coil. The span at 198–218 (SNEEEEETTTDTEEEEEEDTL) shows a compositional bias: acidic residues. Low complexity-rich tracts occupy residues 219 to 231 (LNEN…KNSS), 337 to 359 (NYNN…NNNN), and 536 to 595 (NNNN…SSSS). Composition is skewed to low complexity over residues 1185–1234 (NNNN…NNNN), 1251–1275 (SPST…NNNK), and 1286–1305 (SPSS…SSSG).

It belongs to the retinoblastoma protein (RB) family.

It is found in the nucleus. Key regulator of entry into cell division. Directly involved in heterochromatin formation by maintaining overall chromatin structure and, in particular, that of constitutive heterochromatin by stabilizing histone methylation. Controls histone H4 'Lys-20' trimethylation. Probably acts as a transcription repressor by recruiting chromatin-modifying enzymes to promoters. Plays a dual role, regulating cell-cycle progression and transcriptional events leading to terminal differentiation. In the absence of a G1 phase, functions in late G2 controlling the expression of both S-phase and mitotic genes. Controls stalk/spore preference by suppressing the DIF response in cells destined for the spore pathway. DIF is a chlorinated hydroxyphenone made by cells of spore pathway that promotes stalk differentiation. This Dictyostelium discoideum (Social amoeba) protein is Retinoblastoma-like protein A.